Consider the following 913-residue polypeptide: Collagen alpha-2(I) chain (913 aa).

The interval 1–913 (SGGFDFSFLP…FGYEGDFYRA (913 aa)) is disordered. 4-hydroxyproline is present on residues Pro-10, Pro-13, Pro-35, and Pro-41. Low complexity-rich tracts occupy residues 28–67 (LMGPRGPPGASGAPGPQGFQGPAGEPGEPGQTGPAGARGP), 125–154 (VGAPGPAGARGSDGSVGPVGPAGPIGSAGP), and 199–220 (PGANGLTGAKGAAGLPGVAGAP). Residues 254 to 263 (GESGGKGEPG) show a composition bias toward gly residues. Residues 264–274 (SAGPQGPPGSS) show a composition bias toward low complexity. Residues 281–303 (GPNGGSTGPTGPPGLRGGPGSRG) show a composition bias toward gly residues. The segment covering 316 to 332 (PAGARGASGPAGVRGPS) has biased composition (low complexity). 4-hydroxyproline is present on residues Pro-338 and Pro-341. Low complexity-rich tracts occupy residues 367 to 386 (LPGIDGRPGPIGPAGARGEA) and 408 to 421 (PDGNNGAQGPPGLQ). The span at 422-431 (GVQGGKGTTG) shows a compositional bias: gly residues. 2 stretches are compositionally biased toward low complexity: residues 459-476 (PGESGAVGPSGAIGSRGP) and 488-498 (EPGVVGAPGTA). Gly residues predominate over residues 499 to 517 (GPAGSGGPGERGAAGIPGG). Composition is skewed to low complexity over residues 527–574 (RGEV…PRGS) and 581–601 (VGPAGPNGFAGPAGAAGQPGA). Residues 602–611 (KGERGTKGPK) show a composition bias toward basic and acidic residues. Positions 619–629 (PTGPVGSAGPA) are enriched in low complexity. Residues 639–648 (GSRGDGGPPG) show a composition bias toward gly residues. A compositionally biased stretch (low complexity) spans 650 to 659 (TGFPGAAGRT). Gly residues predominate over residues 696-705 (GETGAGGPPG). 2 stretches are compositionally biased toward low complexity: residues 713 to 740 (SGEPGTAGPPGTAGPQGLLGAPGILGLP) and 748 to 758 (LPGVAGAVGEP). The segment covering 759–776 (GPLGIGPPGARGPSGAGK) has biased composition (gly residues). Residues 782 to 797 (EPGPVGSVGPVGALGP) show a composition bias toward low complexity. Basic and acidic residues predominate over residues 807–818 (RGDKGEPGEKGP). Over residues 883 to 895 (SGPPGPPGPPGPP) the composition is skewed to pro residues.

This sequence belongs to the fibrillar collagen family. Trimers of one alpha 2(I) and two alpha 1(I) chains. Interacts (via C-terminus) with TMEM131 (via PapD-L domain); the interaction is direct and is involved in assembly and TRAPPIII ER-to-Golgi transport complex-dependent secretion of collagen. In terms of processing, prolines at the third position of the tripeptide repeating unit (G-X-Y) are hydroxylated in some or all of the chains. As to expression, expressed in bones.

It is found in the secreted. The protein localises to the extracellular space. It localises to the extracellular matrix. Functionally, type I collagen is a member of group I collagen (fibrillar forming collagen). The chain is Collagen alpha-2(I) chain from Parocnus serus (Greater Haitian ground sloth).